We begin with the raw amino-acid sequence, 163 residues long: 6,7-dimethyl-8-ribityllumazine synthase (163 aa).

5-amino-6-(D-ribitylamino)uracil-binding positions include phenylalanine 27, 58–60, and 87–89; these read ALE and CVV. 92-93 contacts (2S)-2-hydroxy-3-oxobutyl phosphate; that stretch reads DT. Histidine 95 serves as the catalytic Proton donor. Asparagine 120 lines the 5-amino-6-(D-ribitylamino)uracil pocket. Arginine 134 provides a ligand contact to (2S)-2-hydroxy-3-oxobutyl phosphate.

Belongs to the DMRL synthase family.

It catalyses the reaction (2S)-2-hydroxy-3-oxobutyl phosphate + 5-amino-6-(D-ribitylamino)uracil = 6,7-dimethyl-8-(1-D-ribityl)lumazine + phosphate + 2 H2O + H(+). It participates in cofactor biosynthesis; riboflavin biosynthesis; riboflavin from 2-hydroxy-3-oxobutyl phosphate and 5-amino-6-(D-ribitylamino)uracil: step 1/2. Its function is as follows. Catalyzes the formation of 6,7-dimethyl-8-ribityllumazine by condensation of 5-amino-6-(D-ribitylamino)uracil with 3,4-dihydroxy-2-butanone 4-phosphate. This is the penultimate step in the biosynthesis of riboflavin. This Nitrobacter winogradskyi (strain ATCC 25391 / DSM 10237 / CIP 104748 / NCIMB 11846 / Nb-255) protein is 6,7-dimethyl-8-ribityllumazine synthase.